The primary structure comprises 163 residues: UPF0478 protein SERP1299 (163 aa).

A helical transmembrane segment spans residues 7–27 (IAGIIAAIAFLILCIGIVVVL).

The protein belongs to the UPF0478 family.

It localises to the cell membrane. This Staphylococcus epidermidis (strain ATCC 35984 / DSM 28319 / BCRC 17069 / CCUG 31568 / BM 3577 / RP62A) protein is UPF0478 protein SERP1299.